The following is a 239-amino-acid chain: Mannose-binding protein A (239 aa).

The signal sequence occupies residues 1–18 (MLLLPLLPVLLCVVSVSS). The tract at residues 35 to 88 (ACGRDGRDGPKGEKGEPGQGLRGLQGPPGKLGPPGSVGSPGSPGPKGQKGDHGD) is disordered. Residues 37–89 (GRDGRDGPKGEKGEPGQGLRGLQGPPGKLGPPGSVGSPGSPGPKGQKGDHGDN) enclose the Collagen-like domain. The span at 38 to 50 (RDGRDGPKGEKGE) shows a compositional bias: basic and acidic residues. A 4-hydroxyproline modification is found at P44. A 5-hydroxylysine mark is found at K45 and K48. O-linked (Gal...) hydroxylysine glycans are attached at residues K45 and K48. 4-hydroxyproline is present on residues P51, P62, P68, P74, and P79. A compositionally biased stretch (low complexity) spans 58 to 74 (LQGPPGKLGPPGSVGSP). K80 and K83 each carry 5-hydroxylysine. O-linked (Gal...) hydroxylysine glycans are attached at residues K80 and K83. Residues 144–239 (SLCTELQGTV…SFKAVCEFPA (96 aa)) enclose the C-type lectin domain. Intrachain disulfides connect C146-C235 and C213-C227. The Ca(2+) site is built by D179, E183, E203, N205, E211, D212, N223, and D224. A calcium-dependent carbohydrate binding region spans residues 203–211 (EPNNHGSGE).

In terms of assembly, homotrimer. Forms higher oligomeric complexes formed by the association of two, three or more homotrimers. Oligomerization occurs in the endoplasmic reticulum. Interacts with MASP1 and MASP2. Post-translationally, hydroxylated on lysine and proline residues within the collagen-like domain. O-glycosylated. O-linked glycans on hydroxylysine residues consist of Glc-Gal disaccharides bound to the oxygen atom of post-translationally added hydroxyl groups. As to expression, detected in liver and blood serum (at protein level). Detected in liver.

It localises to the secreted. Calcium-dependent lectin. Plays a role in the innate immune response by binding mannose, fucose and N-acetylglucosamine moieties on different microorganisms and mediating activation of the lectin complement pathway. Binds to late apoptotic cells, as well as to apoptotic blebs and to necrotic cells, but not to early apoptotic cells, facilitating their uptake by macrophages. In Mus musculus (Mouse), this protein is Mannose-binding protein A (Mbl1).